The chain runs to 332 residues: Succinylglutamate desuccinylase (332 aa).

The Zn(2+) site is built by H59, E62, and H151. E215 is a catalytic residue.

It belongs to the AspA/AstE family. Succinylglutamate desuccinylase subfamily. Requires Zn(2+) as cofactor.

The enzyme catalyses N-succinyl-L-glutamate + H2O = L-glutamate + succinate. Its pathway is amino-acid degradation; L-arginine degradation via AST pathway; L-glutamate and succinate from L-arginine: step 5/5. Its function is as follows. Transforms N(2)-succinylglutamate into succinate and glutamate. In Pseudomonas paraeruginosa (strain DSM 24068 / PA7) (Pseudomonas aeruginosa (strain PA7)), this protein is Succinylglutamate desuccinylase.